The chain runs to 32 residues: MSDIN-like toxin proprotein 1 (32 aa).

A propeptide spanning residues 1-10 (MSDINATRLP) is cleaved from the precursor. Residues 11–18 (IFWFIYFP) constitute a cross-link (cyclopeptide (Ile-Pro)). A propeptide spanning residues 19–32 (CVSDVDSTLTRGER) is cleaved from the precursor.

It belongs to the MSDIN fungal toxin family. Post-translationally, processed by the macrocyclase-peptidase enzyme POPB to yield a toxic cyclic octapeptide. POPB first removes 10 residues from the N-terminus. Conformational trapping of the remaining peptide forces the enzyme to release this intermediate rather than proceed to macrocyclization. The enzyme rebinds the remaining peptide in a different conformation and catalyzes macrocyclization of the N-terminal 8 residues. In terms of tissue distribution, expressed in basidiocarps.

In terms of biological role, probable toxin that belongs to the MSDIN-like toxin family responsible for a large number of food poisoning cases and deaths. This chain is MSDIN-like toxin proprotein 1, found in Amanita exitialis (Guangzhou destroying angel).